A 105-amino-acid polypeptide reads, in one-letter code: Large ribosomal subunit protein uL24 (105 aa).

It belongs to the universal ribosomal protein uL24 family. As to quaternary structure, part of the 50S ribosomal subunit.

One of two assembly initiator proteins, it binds directly to the 5'-end of the 23S rRNA, where it nucleates assembly of the 50S subunit. Functionally, one of the proteins that surrounds the polypeptide exit tunnel on the outside of the subunit. The polypeptide is Large ribosomal subunit protein uL24 (Lachnoclostridium phytofermentans (strain ATCC 700394 / DSM 18823 / ISDg) (Clostridium phytofermentans)).